We begin with the raw amino-acid sequence, 127 residues long: Putative B3 domain-containing protein At4g12617 (127 aa).

The TF-B3 DNA-binding region spans 35–127 (IMMPKTLLEA…HTRLNFKHVA (93 aa)).

It is found in the nucleus. This Arabidopsis thaliana (Mouse-ear cress) protein is Putative B3 domain-containing protein At4g12617.